We begin with the raw amino-acid sequence, 270 residues long: Ribonuclease HII (270 aa).

In terms of domain architecture, RNase H type-2 spans 84-270 (RYIAGVDEVG…HRNSFLTKLL (187 aa)). Residues Asp-90, Glu-91, and Asp-186 each coordinate a divalent metal cation.

It belongs to the RNase HII family. The cofactor is Mn(2+). Mg(2+) is required as a cofactor.

It is found in the cytoplasm. It carries out the reaction Endonucleolytic cleavage to 5'-phosphomonoester.. Its function is as follows. Endonuclease that specifically degrades the RNA of RNA-DNA hybrids. The chain is Ribonuclease HII from Clostridium beijerinckii (strain ATCC 51743 / NCIMB 8052) (Clostridium acetobutylicum).